Reading from the N-terminus, the 607-residue chain is Zinc metalloproteinase-disintegrin-like atrase-A (607 aa).

The N-terminal stretch at 1–20 (MIQALLVIICLAVFPHQGSS) is a signal peptide. A propeptide spanning residues 21–196 (IILESGNVND…KTSQLTNTPE (176 aa)) is cleaved from the precursor. The Peptidase M12B domain maps to 205-398 (KYIEFYLVVD…ERPQCILNKP (194 aa)). Ca(2+) is bound at residue glutamate 208. N-linked (GlcNAc...) asparagine glycans are attached at residues asparagine 220 and asparagine 270. Aspartate 290 provides a ligand contact to Ca(2+). Asparagine 301 is a glycosylation site (N-linked (GlcNAc...) asparagine). Disulfide bonds link cysteine 314-cysteine 393, cysteine 353-cysteine 377, and cysteine 355-cysteine 360. Residues histidine 338, histidine 342, and histidine 348 each coordinate Zn(2+). Ca(2+) contacts are provided by cysteine 393, asparagine 396, asparagine 411, phenylalanine 413, glutamate 415, glutamate 418, and aspartate 421. The Disintegrin domain occupies 406–492 (RPVCGNNFVE…ECPTDSLQRN (87 aa)). 14 disulfide bridges follow: cysteine 409-cysteine 438, cysteine 420-cysteine 433, cysteine 422-cysteine 428, cysteine 432-cysteine 455, cysteine 446-cysteine 452, cysteine 451-cysteine 477, cysteine 464-cysteine 484, cysteine 471-cysteine 503, cysteine 496-cysteine 508, cysteine 515-cysteine 565, cysteine 530-cysteine 573, cysteine 543-cysteine 553, cysteine 560-cysteine 599, and cysteine 593-cysteine 604. Asparagine 434 carries an N-linked (GlcNAc...) asparagine glycan. A D/ECD-tripeptide motif is present at residues 470 to 472 (DCD). Residues aspartate 472, leucine 473, glutamate 475, aspartate 487, and serine 488 each coordinate Ca(2+). N-linked (GlcNAc...) asparagine glycosylation occurs at asparagine 522.

Belongs to the venom metalloproteinase (M12B) family. P-III subfamily. P-IIIa sub-subfamily. As to quaternary structure, monomer. The cofactor is Zn(2+). As to expression, expressed by the venom gland.

Its subcellular location is the secreted. Its function is as follows. Snake venom zinc metalloproteinase that inhibits platelet aggregation by cleaving platelet glycoprotein Ib alpha (GP1BA) at Glu-298/Asp-299, and abolishes binding of von Willebrand factor (VWF) to GPIBA. The protein is Zinc metalloproteinase-disintegrin-like atrase-A of Naja atra (Chinese cobra).